The primary structure comprises 265 residues: Pyridoxine 5'-phosphate synthase (265 aa).

N6 contacts 3-amino-2-oxopropyl phosphate. 1-deoxy-D-xylulose 5-phosphate is bound at residue 8–9 (DH). R17 contributes to the 3-amino-2-oxopropyl phosphate binding site. Residue H42 is the Proton acceptor of the active site. Residues R44 and H49 each contribute to the 1-deoxy-D-xylulose 5-phosphate site. E69 serves as the catalytic Proton acceptor. Position 99 (T99) interacts with 1-deoxy-D-xylulose 5-phosphate. H213 (proton donor) is an active-site residue. 3-amino-2-oxopropyl phosphate is bound by residues G214 and 235-236 (GQ).

Belongs to the PNP synthase family. As to quaternary structure, homooctamer; tetramer of dimers.

The protein resides in the cytoplasm. It catalyses the reaction 3-amino-2-oxopropyl phosphate + 1-deoxy-D-xylulose 5-phosphate = pyridoxine 5'-phosphate + phosphate + 2 H2O + H(+). Its pathway is cofactor biosynthesis; pyridoxine 5'-phosphate biosynthesis; pyridoxine 5'-phosphate from D-erythrose 4-phosphate: step 5/5. In terms of biological role, catalyzes the complicated ring closure reaction between the two acyclic compounds 1-deoxy-D-xylulose-5-phosphate (DXP) and 3-amino-2-oxopropyl phosphate (1-amino-acetone-3-phosphate or AAP) to form pyridoxine 5'-phosphate (PNP) and inorganic phosphate. This Nitratiruptor sp. (strain SB155-2) protein is Pyridoxine 5'-phosphate synthase.